The primary structure comprises 224 residues: Thymidine kinase (224 aa).

Residues 19-26 and 93-96 contribute to the ATP site; these read GPMFAGKT and DEVQ. Glu-94 serves as the catalytic Proton acceptor. Cys-150, Cys-153, Cys-188, and His-191 together coordinate Zn(2+).

The protein belongs to the thymidine kinase family. In terms of assembly, homotetramer.

Its subcellular location is the cytoplasm. The catalysed reaction is thymidine + ATP = dTMP + ADP + H(+). This Mycoplasmoides gallisepticum (strain R(low / passage 15 / clone 2)) (Mycoplasma gallisepticum) protein is Thymidine kinase.